The following is a 247-amino-acid chain: Caffeoyl-CoA O-methyltransferase 2 (247 aa).

Lys21 serves as a coordination point for substrate. S-adenosyl-L-methionine contacts are provided by residues Thr63, Glu85, 87–88 (GV), Ser93, Asp111, and Ala140. Asp163 serves as a coordination point for substrate. Asp163 lines the a divalent metal cation pocket. Asp165 contributes to the S-adenosyl-L-methionine binding site. The a divalent metal cation site is built by Asp189 and Asn190. Asn194 lines the substrate pocket.

This sequence belongs to the class I-like SAM-binding methyltransferase superfamily. Cation-dependent O-methyltransferase family. CCoAMT subfamily. The cofactor is a divalent metal cation.

It carries out the reaction (E)-caffeoyl-CoA + S-adenosyl-L-methionine = (E)-feruloyl-CoA + S-adenosyl-L-homocysteine + H(+). Its pathway is aromatic compound metabolism; phenylpropanoid biosynthesis. Methylates caffeoyl-CoA to feruloyl-CoA and 5-hydroxyferuloyl-CoA to sinapoyl-CoA. Plays a role in the synthesis of feruloylated polysaccharides. Involved in the reinforcement of the plant cell wall. Also involved in the responding to wounding or pathogen challenge by the increased formation of cell wall-bound ferulic acid polymers. The protein is Caffeoyl-CoA O-methyltransferase 2 (CCOAOMT2) of Populus trichocarpa (Western balsam poplar).